The following is a 465-amino-acid chain: Soluble pyridine nucleotide transhydrogenase (465 aa).

An FAD-binding site is contributed by 35–44 (ERYNNVGGGC).

The protein belongs to the class-I pyridine nucleotide-disulfide oxidoreductase family. FAD serves as cofactor.

The protein localises to the cytoplasm. The enzyme catalyses NAD(+) + NADPH = NADH + NADP(+). Functionally, conversion of NADPH, generated by peripheral catabolic pathways, to NADH, which can enter the respiratory chain for energy generation. In Photorhabdus laumondii subsp. laumondii (strain DSM 15139 / CIP 105565 / TT01) (Photorhabdus luminescens subsp. laumondii), this protein is Soluble pyridine nucleotide transhydrogenase.